The primary structure comprises 244 residues: Cysteine-rich secretory protein 1 (244 aa).

An N-terminal signal peptide occupies residues 1–19; sequence MALMLVLFFLAAVLPPSLL. Residues 44 to 170 form the SCP domain; the sequence is SKHNQLRRMV…PLRYYYVCHY (127 aa). Asparagine 145 carries an N-linked (GlcNAc...) asparagine glycan. Intrachain disulfides connect cysteine 190-cysteine 197, cysteine 193-cysteine 202, cysteine 206-cysteine 239, cysteine 215-cysteine 233, and cysteine 224-cysteine 237. In terms of domain architecture, ShKT spans 206–239; that stretch reads CGHEDKYTNCKYLKKMLSCEHELLKKGCKATCLC.

This sequence belongs to the CRISP family. As to expression, mainly found in the cauda epididymis where it is synthesized by the principal cells and secreted into the lumen. Binds to the heads of spermatozoa. Also expressed in the submandibular gland.

It is found in the cytoplasmic vesicle. The protein resides in the secretory vesicle. This protein is supposed to help spermatozoa undergo functional maturation while they move from the testis to the ductus deferens. This is Cysteine-rich secretory protein 1 (Crisp1) from Mus musculus (Mouse).